A 153-amino-acid chain; its full sequence is NADPH-dependent 7-cyano-7-deazaguanine reductase (153 aa).

Residues 1 to 30 (MDSIETHAKQLGQQTPLPASPEAAQLDRVP) are disordered. Residue cysteine 51 is the Thioimide intermediate of the active site. Aspartate 58 (proton donor) is an active-site residue. Residues 73-75 (VES) and 92-93 (HE) contribute to the substrate site.

The protein belongs to the GTP cyclohydrolase I family. QueF type 1 subfamily.

It is found in the cytoplasm. The catalysed reaction is 7-aminomethyl-7-carbaguanine + 2 NADP(+) = 7-cyano-7-deazaguanine + 2 NADPH + 3 H(+). The protein operates within tRNA modification; tRNA-queuosine biosynthesis. Catalyzes the NADPH-dependent reduction of 7-cyano-7-deazaguanine (preQ0) to 7-aminomethyl-7-deazaguanine (preQ1). The protein is NADPH-dependent 7-cyano-7-deazaguanine reductase of Methylorubrum extorquens (strain CM4 / NCIMB 13688) (Methylobacterium extorquens).